The chain runs to 424 residues: Synaptotagmin-1 (424 aa).

Residues 1–60 (MVSESHHEALAAPPATTVAAALPSNVTEPAAPGGGGGKEDAFSNLKKKFMNELNKIPLPP) are Vesicular-facing. Residue Asn25 is glycosylated (N-linked (GlcNAc...) asparagine). Residues 61 to 82 (WALIAIAIVAVLLILTCCFCLC) form a helical membrane-spanning segment. 5 S-palmitoyl cysteine lipidation sites follow: Cys77, Cys78, Cys80, Cys82, and Cys85. Residues 83 to 424 (KKCLFKKKNK…EVDAMLAVKK (342 aa)) are Cytoplasmic-facing. The interval 117 to 142 (KDQALKDDDAETGLTDGEEKEEPKEV) is disordered. The segment covering 124–136 (DDAETGLTDGEEK) has biased composition (acidic residues). Residues 138-384 (EPKEVEKLGK…AIGKVFVGYN (247 aa)) are phospholipid binding. 2 consecutive C2 domains span residues 144-263 (KLGK…EEWR) and 275-408 (KLGD…AQWH). Leu174, Asp175, Asp181, Asp233, Phe234, Asp235, Ser238, Lys239, Asp241, Asp306, Asp312, Asp366, Asp368, and Asp374 together coordinate Ca(2+).

Belongs to the synaptotagmin family. Homotetramer. Ca(2+) serves as cofactor.

Its subcellular location is the cytoplasmic vesicle. The protein localises to the secretory vesicle membrane. It is found in the secretory vesicle. It localises to the synaptic vesicle membrane. The protein resides in the chromaffin granule membrane. Its subcellular location is the cytoplasm. In terms of biological role, calcium sensor that participates in triggering neurotransmitter release at the synapse. May have a regulatory role in the membrane interactions during trafficking of synaptic vesicles at the active zone of the synapse. It binds acidic phospholipids with a specificity that requires the presence of both an acidic head group and a diacyl backbone. May play a role in dendrite formation by melanocytes. The polypeptide is Synaptotagmin-1 (SYT1) (Gallus gallus (Chicken)).